A 243-amino-acid chain; its full sequence is Zinc import ATP-binding protein ZnuC (243 aa).

The 216-residue stretch at 4-219 folds into the ABC transporter domain; sequence IAAHHLAVRR…PEYRALFGHG (216 aa). 36–43 contacts ATP; sequence GPNGSGKS.

It belongs to the ABC transporter superfamily. Zinc importer (TC 3.A.1.15.5) family. The complex is composed of two ATP-binding proteins (ZnuC), two transmembrane proteins (ZnuB) and a solute-binding protein (ZnuA).

The protein localises to the cell inner membrane. It catalyses the reaction Zn(2+)(out) + ATP(in) + H2O(in) = Zn(2+)(in) + ADP(in) + phosphate(in) + H(+)(in). Its function is as follows. Part of the ABC transporter complex ZnuABC involved in zinc import. Responsible for energy coupling to the transport system. This Cereibacter sphaeroides (strain ATCC 17023 / DSM 158 / JCM 6121 / CCUG 31486 / LMG 2827 / NBRC 12203 / NCIMB 8253 / ATH 2.4.1.) (Rhodobacter sphaeroides) protein is Zinc import ATP-binding protein ZnuC.